We begin with the raw amino-acid sequence, 80 residues long: Cell division activator CedA (80 aa).

This sequence belongs to the CedA family.

Functionally, activates the cell division inhibited by chromosomal DNA over-replication. The polypeptide is Cell division activator CedA (Citrobacter koseri (strain ATCC BAA-895 / CDC 4225-83 / SGSC4696)).